Here is a 218-residue protein sequence, read N- to C-terminus: MGQKVNPVGLRIGVIRDWESKWYAGKDYADFLHEDLKIREFISKRLSDASVSKVEIERAANRVNITIHTAKPGMVIGKGGSEVEALRKALNSLTGKRVHINILEIKRADLDAQLVADNIARQLENRISFRRAQKQQIQRTMRAGAQGVKTMVSGRLGGADIARSEYYSEGTVPLHTLRADIDYATSEADTTYGKLGVKVWIYRGEVLPTKKKTEEGGK.

One can recognise a KH type-2 domain in the interval 38 to 106 (IREFISKRLS…RVHINILEIK (69 aa)).

Belongs to the universal ribosomal protein uS3 family. As to quaternary structure, part of the 30S ribosomal subunit. Forms a tight complex with proteins S10 and S14.

Functionally, binds the lower part of the 30S subunit head. Binds mRNA in the 70S ribosome, positioning it for translation. The polypeptide is Small ribosomal subunit protein uS3 (Bacillus velezensis (strain DSM 23117 / BGSC 10A6 / LMG 26770 / FZB42) (Bacillus amyloliquefaciens subsp. plantarum)).